Reading from the N-terminus, the 530-residue chain is Lysine--tRNA ligase (530 aa).

Positions 28 to 36 (PSGHIHVGN) match the 'HIGH' region motif. A 'KMSKS' region motif is present at residues 278-282 (PMSSS).

This sequence belongs to the class-I aminoacyl-tRNA synthetase family.

Its subcellular location is the cytoplasm. It catalyses the reaction tRNA(Lys) + L-lysine + ATP = L-lysyl-tRNA(Lys) + AMP + diphosphate. This is Lysine--tRNA ligase (lysS) from Methanocaldococcus jannaschii (strain ATCC 43067 / DSM 2661 / JAL-1 / JCM 10045 / NBRC 100440) (Methanococcus jannaschii).